The following is a 1708-amino-acid chain: Rapamycin-insensitive companion of mTOR (1708 aa).

The tract at residues 1–789 (MAAIGRGRSL…DKANLHALIQ (789 aa)) is interaction with NBN. Phosphoserine occurs at positions 21, 35, and 265. K274 is covalently cross-linked (Glycyl lysine isopeptide (Lys-Gly) (interchain with G-Cter in ubiquitin)). Residues 521–570 (LKDTEEALLINLRDSQVLQHKENLDWDWNLIGTILKWPNVNLRNYKDEQL) are ribosome-binding domain. Residues N543, R572, and R576 each contribute to the ATP site. Positions 1021–1043 (TLSLNSESTSSRHNSESESAPSS) are enriched in low complexity. Residues 1021–1045 (TLSLNSESTSSRHNSESESAPSSMF) are disordered. An N6-acetyllysine mark is found at K1092 and K1095. Disordered stretches follow at residues 1101–1198 (SLTL…ENTS) and 1218–1247 (SFNT…PTAM). Phosphothreonine is present on T1103. Residues K1116, K1119, and K1125 each carry the N6-acetyllysine modification. Phosphothreonine; by RPS6KB1 is present on T1135. S1138 is subject to Phosphoserine. Polar residues predominate over residues 1147–1158 (FTSSSAQKSLQL). Phosphoserine occurs at positions 1161, 1218, and 1234. Residues 1221 to 1239 (TDTTTSGISSMSSSPSRET) show a composition bias toward low complexity. The residue at position 1270 (T1270) is a Phosphothreonine. Phosphoserine occurs at positions 1273, 1277, 1281, and 1283. T1294 carries the post-translational modification Phosphothreonine. S1301 and S1312 each carry phosphoserine. T1331 bears the Phosphothreonine mark. 2 positions are modified to phosphoserine: S1345 and S1352. Residue T1375 is modified to Phosphothreonine. Position 1384 is a phosphoserine (S1384). At Y1385 the chain carries Phosphotyrosine. 3 positions are modified to phosphoserine: S1387, S1395, and S1410. Zn(2+)-binding residues include H1514, C1519, and C1522. Residues S1570, S1573, S1576, and S1591 each carry the phosphoserine modification. Residue C1651 coordinates Zn(2+).

This sequence belongs to the RICTOR family. As to quaternary structure, component of the mechanistic target of rapamycin complex 2 (mTORC2), consisting in two heterotretramers composed of MTOR, MLST8, RICTOR and MAPKAP1/SIN1. The mTORC2 core complex associates with PRR5/PROTOR1 and/or PRR5L/PROTOR2. Contrary to mTORC1, mTORC2 does not bind to and is not sensitive to FKBP12-rapamycin. Binds directly to MTOR and PRR5 within the TORC2 complex; interaction with MTOR is enhanced by deubiquitination of RICTOR by USP9X. Interaction with MAPKAP1 is not enhanced by RICTOR deubiquitination by USP9X. Interacts with CCDC28B. Interacts with NBN. Interacts with SIK3. Interacts with NCKAP1L. Interacts with ARMH4 (via cytoplasmic tail); this interaction bridges ARMH4 to the mTORC2 complex and inhibits the mTORC2 kinase activity. Interacts with UBXN2A. Interacts with TSPAN8. Post-translationally, phosphorylated by MTOR; when part of mTORC2. Phosphorylated at Thr-1135 by RPS6KB1 downstream of the mTORC1 complex: phosphorylation of RICTOR inhibits mTORC2 signaling by creating a binding site for 14-3-3 proteins. Phosphorylated at Ser-1234 by GSK3B in response to endoplasmic stress, inhibiting mTORC2 signaling. Ubiquitinated by the SCF(FBXW7) complex, leading to its degradation by the proteasome. Deubiquitinated by USP9X; deubiquitination stabilizes RICTOR and enhances its binding to MTOR, thus promoting mTORC2 complex assembly. In terms of processing, acetylated by EP300/p300 in response to glucose, leading to activate the mTORC2 complex. Acetylation by BLOC1S1/GCN5L1 in response to hypotoxic stress protects RICTOR against ubiquitination and subsequent degradation by the proteasome. In terms of tissue distribution, highest levels in liver and brain with expression also detected in heart, muscle, spleen and kidney (at protein level).

It localises to the cell membrane. It is found in the endoplasmic reticulum membrane. The protein localises to the lysosome membrane. Component of the mechanistic target of rapamycin complex 2 (mTORC2), which transduces signals from growth factors to pathways involved in proliferation, cytoskeletal organization, lipogenesis and anabolic output. In response to growth factors, mTORC2 phosphorylates and activates AGC protein kinase family members, including AKT (AKT1, AKT2 and AKT3), PKC (PRKCA, PRKCB and PRKCE) and SGK1. In contrast to mTORC1, mTORC2 is nutrient-insensitive. Within the mTORC2 complex, RICTOR probably acts as a molecular adapter. RICTOR is responsible for the FKBP12-rapamycin-insensitivity of mTORC2. mTORC2 plays a critical role in AKT1 activation by mediating phosphorylation of different sites depending on the context, such as 'Thr-450', 'Ser-473', 'Ser-477' or 'Thr-479', facilitating the phosphorylation of the activation loop of AKT1 on 'Thr-308' by PDPK1/PDK1 which is a prerequisite for full activation. mTORC2 catalyzes the phosphorylation of SGK1 at 'Ser-422' and of PRKCA on 'Ser-657'. The mTORC2 complex also phosphorylates various proteins involved in insulin signaling, such as FBXW8 and IGF2BP1. mTORC2 acts upstream of Rho GTPases to regulate the actin cytoskeleton, probably by activating one or more Rho-type guanine nucleotide exchange factors. mTORC2 promotes the serum-induced formation of stress-fibers or F-actin. Plays an essential role in embryonic growth and development. This chain is Rapamycin-insensitive companion of mTOR, found in Mus musculus (Mouse).